A 143-amino-acid chain; its full sequence is Transcriptional regulator MraZ (143 aa).

2 consecutive SpoVT-AbrB domains span residues 5–47 (EYRH…TQEE) and 76–119 (ATEC…SEDR).

This sequence belongs to the MraZ family. In terms of assembly, forms oligomers.

The protein localises to the cytoplasm. Its subcellular location is the nucleoid. This is Transcriptional regulator MraZ from Ligilactobacillus salivarius (strain UCC118) (Lactobacillus salivarius).